Reading from the N-terminus, the 318-residue chain is Acetyl-coenzyme A carboxylase carboxyl transferase subunit alpha (318 aa).

One can recognise a CoA carboxyltransferase C-terminal domain in the interval 41 to 295 (RLTTKSQELT…KRQLIADLGS (255 aa)).

This sequence belongs to the AccA family. Acetyl-CoA carboxylase is a heterohexamer composed of biotin carboxyl carrier protein (AccB), biotin carboxylase (AccC) and two subunits each of ACCase subunit alpha (AccA) and ACCase subunit beta (AccD).

The protein resides in the cytoplasm. The enzyme catalyses N(6)-carboxybiotinyl-L-lysyl-[protein] + acetyl-CoA = N(6)-biotinyl-L-lysyl-[protein] + malonyl-CoA. The protein operates within lipid metabolism; malonyl-CoA biosynthesis; malonyl-CoA from acetyl-CoA: step 1/1. Component of the acetyl coenzyme A carboxylase (ACC) complex. First, biotin carboxylase catalyzes the carboxylation of biotin on its carrier protein (BCCP) and then the CO(2) group is transferred by the carboxyltransferase to acetyl-CoA to form malonyl-CoA. The protein is Acetyl-coenzyme A carboxylase carboxyl transferase subunit alpha of Idiomarina loihiensis (strain ATCC BAA-735 / DSM 15497 / L2-TR).